Reading from the N-terminus, the 291-residue chain is uncharacterized protein (291 aa).

4 helical membrane-spanning segments follow: residues I13–I33, I84–I104, L111–I131, and L219–L239.

It is found in the cell membrane. This is an uncharacterized protein from Ureaplasma parvum serovar 3 (strain ATCC 700970).